The chain runs to 335 residues: Mitochondrial carrier protein CoAc2 (335 aa).

6 helical membrane passes run 12–32, 75–95, 119–139, 187–207, 225–242, and 280–302; these read SGPGLPLAVRELLAGGVAGGV, FYRGNGASVARIVPYAALHYM, LVAGSIAGGTAVICTYPLDLV, GMAPSLYGIFPYSGLKFYFYE, LGCGSVAGLLGQTITYPL, and LFSGLSINYLKVVPSVAIGFTVY. 3 Solcar repeats span residues 17–103, 113–212, and 219–308; these read PLAV…YRRW, QGPV…MKSH, and KGII…MKVC.

Belongs to the mitochondrial carrier (TC 2.A.29) family. In terms of tissue distribution, expressed throughout the plant.

It localises to the mitochondrion inner membrane. In terms of biological role, required for the accumulation of coenzyme A in the mitochondrial matrix. This Zea mays (Maize) protein is Mitochondrial carrier protein CoAc2.